The chain runs to 81 residues: Photosystem I iron-sulfur center (81 aa).

2 4Fe-4S ferredoxin-type domains span residues 2 to 31 and 39 to 68; these read SHTV…MVPW and IASS…IRVY. Residues Cys-11, Cys-14, Cys-17, Cys-21, Cys-48, Cys-51, Cys-54, and Cys-58 each contribute to the [4Fe-4S] cluster site.

As to quaternary structure, the cyanobacterial PSI reaction center is composed of one copy each of PsaA,B,C,D,E,F,I,J,K,L,M and X, and forms trimeric complexes. Requires [4Fe-4S] cluster as cofactor.

The protein localises to the cellular thylakoid membrane. It catalyses the reaction reduced [plastocyanin] + hnu + oxidized [2Fe-2S]-[ferredoxin] = oxidized [plastocyanin] + reduced [2Fe-2S]-[ferredoxin]. In terms of biological role, apoprotein for the two 4Fe-4S centers FA and FB of photosystem I (PSI); essential for photochemical activity. FB is the terminal electron acceptor of PSI, donating electrons to ferredoxin. The C-terminus interacts with PsaA/B/D and helps assemble the protein into the PSI complex. Required for binding of PsaD and PsaE to PSI. PSI is a plastocyanin/cytochrome c6-ferredoxin oxidoreductase, converting photonic excitation into a charge separation, which transfers an electron from the donor P700 chlorophyll pair to the spectroscopically characterized acceptors A0, A1, FX, FA and FB in turn. In Mastigocladus laminosus (Fischerella sp.), this protein is Photosystem I iron-sulfur center.